Reading from the N-terminus, the 497-residue chain is MAARCWVWGFVVALLAVAAAADGEEEEGKWEPLIRMPTEEGDDAEAAAPAPAPAAADYGGTRWAVLVAGSSGYGNYRHQADVCHACQILQKGGVKEENIVVFMYDDIAHNILNPRPGTIINHPKGGDVYAGVPKDYTGHQVTTENFFAVLLGNKTAVTGGSGKVIDSKPEDHIFIYYSDHGGPGVLGMPNLPYLYAGDFIKVLQKKHASNSYSKMVIYVEACESGSIFEGLMPENLNIYVTTASNAVENSWGTYCPGEEPSPPPEYITCLGDMYSVAWMEDSETHNLKKETIEDQYELVKKRTSNANKLNEGSHVMEYGDKTFKDEKLFLYQGFNPANGNITNELIWPVPKATVNQRDADLLFMWKRYEQLNGVSEDKLRALREIEDTIAHRKHLDSSIDFIGKLVFGFENGPLALEAARSSGQPLVDNWDCLKKMVRIFESQCGSLTQYGMKYMRAFANICNNGVSEAKMMEASINACGRYNSARWSPMTEGGHSA.

The N-terminal stretch at 1 to 23 (MAARCWVWGFVVALLAVAAAADG) is a signal peptide. N-linked (GlcNAc...) asparagine glycosylation is present at Asn-153. Residue His-180 is part of the active site. Residue Cys-222 is the Nucleophile of the active site. An intrachain disulfide couples Cys-255 to Cys-269. A glycan (N-linked (GlcNAc...) asparagine) is linked at Asn-340. 2 disulfide bridges follow: Cys-432–Cys-462 and Cys-444–Cys-479.

This sequence belongs to the peptidase C13 family. Post-translationally, auto-catalytic activation.

It localises to the protein storage vacuole. It catalyses the reaction Hydrolysis of proteins and small molecule substrates at -Asn-|-Xaa- bonds.. Functionally, asparagine-specific endopeptidase that may be involved in processing of proteins targeted to vacuoles. Cysteine protease required for post-translational proteolysis of seed storage proteins in the protein storage vacuole (PSV) of developing seeds, by processing of proglutelin precursor to mature glutelin subunits, thus contributing to the formation of protein crystalline structures in PSV. This chain is Vacuolar-processing enzyme beta-isozyme 1, found in Oryza sativa subsp. indica (Rice).